The sequence spans 2253 residues: Genome polyprotein (2253 aa).

Cys-627 and Cys-694 are oxidised to a cystine. Residues Arg-750–Asp-752 carry the Cell attachment site motif. One can recognise an LRAT domain in the interval Leu-825–Gln-920. Active-site for protein 2A H-NC residues include His-835 and His-846. The active-site For protein 2A H-NC; Acyl-thioester intermediate is the Cys-904. Residues Ile-1002 to Val-1022 traverse the membrane as a helical segment. Residues Tyr-1205–Asp-1366 enclose the SF3 helicase domain. An O-(5'-phospho-RNA)-tyrosine modification is found at Tyr-1559. The Peptidase C3 domain maps to Ala-1586–Asn-1775. Active-site for protease 3C activity residues include His-1626, Asp-1664, and Cys-1739. The Acyl-thioester intermediate role is filled by Cys-1970. A RdRp catalytic domain is found at Pro-2018–Tyr-2132. Mg(2+) is bound by residues Asp-2024 and Asp-2118.

It belongs to the picornaviruses polyprotein family. As to quaternary structure, interacts with capsid protein VP1 and capsid protein VP3 to form heterotrimeric protomers. Five protomers subsequently associate to form pentamers which serve as building blocks for the capsid. In terms of assembly, interacts with capsid protein VP0, and capsid protein VP3 to form heterotrimeric protomers. Five protomers subsequently associate to form pentamers which serve as building blocks for the capsid. Interacts with capsid protein VP0 and capsid protein VP1 to form heterotrimeric protomers. Five protomers subsequently associate to form pentamers which serve as building blocks for the capsid. As to quaternary structure, homohexamer; forms a hexameric ring structure with 6-fold symmetry characteristic of AAA+ ATPases. In terms of assembly, homodimer. Interacts with host ACBD3. Interacts with RNA-directed RNA polymerase. As to quaternary structure, interacts with Viral protein genome-linked. Requires Mg(2+) as cofactor. Post-translationally, VPg is uridylylated by the polymerase and is covalently linked to the 5'-end of genomic RNA. This uridylylated form acts as a nucleotide-peptide primer for the polymerase. Specific enzymatic cleavages yield mature proteins. All cleavages are catalyzed by P3C.

The protein resides in the virion. It localises to the host cytoplasm. Its subcellular location is the host nucleus. It is found in the host nucleolus. The protein localises to the host cytoplasmic vesicle membrane. The protein resides in the host endoplasmic reticulum membrane. It localises to the host Golgi apparatus membrane. The enzyme catalyses RNA(n) + a ribonucleoside 5'-triphosphate = RNA(n+1) + diphosphate. It carries out the reaction a ribonucleoside 5'-triphosphate + H2O = a ribonucleoside 5'-diphosphate + phosphate + H(+). The catalysed reaction is Selective cleavage of Gln-|-Gly bond in the poliovirus polyprotein. In other picornavirus reactions Glu may be substituted for Gln, and Ser or Thr for Gly.. Its function is as follows. Forms an icosahedral capsid of pseudo T=3 symmetry together with capsid proteins VP1 and VP3. The capsid is 300 Angstroms in diameter, composed of 60 copies of each capsid protein and enclosing the viral positive strand RNA genome. The attachment to the host cell receptor induces virion internalization predominantly through clathrin-mediated endocytosis. Binds packaging signals present in the viral RNA. In terms of biological role, forms an icosahedral capsid of pseudo T=3 symmetry together with capsid proteins VP0 and VP1. The capsid is 300 Angstroms in diameter, composed of 60 copies of each capsid protein and enclosing the viral positive strand RNA genome. The attachment to the host cell receptor induces virion internalization predominantly through clathrin-mediated endocytosis. Binds packaging signals present in the viral RNA. Functionally, forms an icosahedral capsid of pseudo T=3 symmetry together with capsid proteins VP0 and VP3. The capsid is 300 Angstroms in diameter, composed of 60 copies of each capsid protein and enclosing the viral positive strand RNA genome. The attachment to the host cell receptor induces virion internalization predominantly through clathrin-mediated endocytosis. Binds packaging signals present in the viral RNA. Mediates self-processing of the polyprotein by a translational effect termed 'ribosome skipping'. Mechanistically, 2A1-mediated cleavage occurs between the C-terminal glycine and the proline of the downstream protein 2A2. Its function is as follows. Plays an essential role in the virus replication cycle by acting as a viroporin. Creates a pore in the host endoplasmic reticulum and as a consequence releases Ca2+ in the cytoplasm of infected cell. In turn, high levels of cytoplasmic calcium may trigger membrane trafficking and transport of viral ER-associated proteins to viroplasms, sites of viral genome replication. In terms of biological role, induces and associates with structural rearrangements of intracellular membranes. Displays RNA-binding, nucleotide binding and NTPase activities. May play a role in virion morphogenesis and viral RNA encapsidation by interacting with the capsid protein VP3. Functionally, localizes the viral replication complex to the surface of membranous vesicles. It inhibits host cell endoplasmic reticulum-to-Golgi apparatus transport and causes the disassembly of the Golgi complex, possibly through GBF1 interaction. This would result in depletion of MHC, trail receptors and IFN receptors at the host cell surface. Plays an essential role in viral RNA replication by recruiting ACBD3 and PI4KB at the viral replication sites, thereby allowing the formation of the rearranged membranous structures where viral replication takes place. Acts as a primer for viral RNA replication and remains covalently bound to viral genomic RNA. VPg is uridylylated prior to priming replication into VPg-pUpU. The VPg-pUpU is then used as primer on the genomic RNA poly(A) by the RNA-dependent RNA polymerase to replicate the viral genome. Following genome release from the infecting virion in the cytoplasm, the VPg-RNA linkage is probably removed by host TDP2. During the late stage of the replication cycle, host TDP2 is excluded from sites of viral RNA synthesis and encapsidation, allowing for the generation of progeny virions. Its function is as follows. Cysteine protease that generates mature viral proteins from the precursor polyprotein. In addition to its proteolytic activity, it binds to viral RNA, and thus influences viral genome replication. RNA and substrate bind cooperatively to the protease. In terms of biological role, replicates the viral genomic RNA on the surface of intracellular membranes. Covalently attaches UMP to a tyrosine of VPg, which is used to prime RNA synthesis. The positive stranded RNA genome is first replicated at virus induced membranous vesicles, creating a dsRNA genomic replication form. This dsRNA is then used as template to synthesize positive stranded RNA genomes. ss(+)RNA genomes are either translated, replicated or encapsidated. In Ljunganvirus 1 (LV), this protein is Genome polyprotein.